A 398-amino-acid chain; its full sequence is Elongation factor Tu (398 aa).

One can recognise a tr-type G domain in the interval 10–207; it reads KPHVNIGTIG…TADEYIPEPE (198 aa). The G1 stretch occupies residues 19–26; the sequence is GHVDHGKT. GTP is bound at residue 19 to 26; it reads GHVDHGKT. Position 26 (Thr-26) interacts with Mg(2+). Residues 63-67 are G2; that stretch reads GITIN. The G3 stretch occupies residues 84 to 87; it reads DAPG. Residues 84–88 and 139–142 contribute to the GTP site; these read DAPGH and NKID. The G4 stretch occupies residues 139-142; the sequence is NKID. The segment at 177–179 is G5; the sequence is SAL.

This sequence belongs to the TRAFAC class translation factor GTPase superfamily. Classic translation factor GTPase family. EF-Tu/EF-1A subfamily. As to quaternary structure, monomer.

The protein resides in the cytoplasm. It carries out the reaction GTP + H2O = GDP + phosphate + H(+). In terms of biological role, GTP hydrolase that promotes the GTP-dependent binding of aminoacyl-tRNA to the A-site of ribosomes during protein biosynthesis. The protein is Elongation factor Tu of Streptococcus uberis (strain ATCC BAA-854 / 0140J).